The chain runs to 372 residues: Chaperone protein DnaJ (372 aa).

Residues 3–68 (NLYEILEVNE…EKRKKYDMYG (66 aa)) enclose the J domain. The CR-type zinc finger occupies 130–212 (GTKKEISYKK…CKGKGYEIER (83 aa)). The Zn(2+) site is built by cysteine 143, cysteine 146, cysteine 160, cysteine 163, cysteine 186, cysteine 189, cysteine 200, and cysteine 203. 4 CXXCXGXG motif repeats span residues 143–150 (CHVCNGDG), 160–167 (CEKCHGTG), 186–193 (CDKCHGEG), and 200–207 (CENCKGKG).

Belongs to the DnaJ family. In terms of assembly, homodimer. It depends on Zn(2+) as a cofactor.

Its subcellular location is the cytoplasm. Participates actively in the response to hyperosmotic and heat shock by preventing the aggregation of stress-denatured proteins and by disaggregating proteins, also in an autonomous, DnaK-independent fashion. Unfolded proteins bind initially to DnaJ; upon interaction with the DnaJ-bound protein, DnaK hydrolyzes its bound ATP, resulting in the formation of a stable complex. GrpE releases ADP from DnaK; ATP binding to DnaK triggers the release of the substrate protein, thus completing the reaction cycle. Several rounds of ATP-dependent interactions between DnaJ, DnaK and GrpE are required for fully efficient folding. Also involved, together with DnaK and GrpE, in the DNA replication of plasmids through activation of initiation proteins. The protein is Chaperone protein DnaJ of Finegoldia magna (strain ATCC 29328 / DSM 20472 / WAL 2508) (Peptostreptococcus magnus).